The chain runs to 545 residues: E3 ubiquitin-protein ligase ipaH9.8 (545 aa).

An interaction with target proteins region spans residues M1 to M242. 8 LRR repeats span residues N57 to A77, Q78 to L99, K100 to P117, A118 to L139, L140 to Q157, A158 to N179, V182 to L203, and N205 to T228. Residues S243–L250 are linker. The tract at residues H251 to S545 is E3 ubiquitin-protein ligase catalytic domain. The NEL domain occupies P253–S545. C337 (glycyl thioester intermediate) is an active-site residue.

This sequence belongs to the LRR-containing bacterial E3 ligase family. Also interacts with human and mouse U2AF1 (U2AF35). In terms of processing, ubiquitinated in the presence of host E1 ubiquitin-activating enzyme, E2 ubiquitin-conjugating enzyme and ubiquitin.

Its subcellular location is the secreted. The protein resides in the host cytoplasm. The protein localises to the host nucleus. It catalyses the reaction S-ubiquitinyl-[E2 ubiquitin-conjugating enzyme]-L-cysteine + [acceptor protein]-L-lysine = [E2 ubiquitin-conjugating enzyme]-L-cysteine + N(6)-ubiquitinyl-[acceptor protein]-L-lysine.. With respect to regulation, exists in an autoinhibited state in the absence of substrate protein, due to interactions of the leucine-rich repeats with NEL domain. Is activated upon binding to a substrate protein. Functionally, effector E3 ubiquitin ligase that interferes with host's ubiquitination pathway and modulates the acute inflammatory responses, thus facilitating bacterial colonization within the host cell. Interacts with IKBKG (NEMO) and TNIP1 (ABIN-1), a ubiquitin-binding adapter protein, which results in TNIP1-dependent 'Lys-27'-linked polyubiquitination of IKBKG. Consequently, polyubiquitinated IKBKG undergoes proteasome-dependent degradation, which perturbs NF-kappa-B activation during bacterial infection. Mediates polyubiquitination of host U2AF1, leading to its proteasomal degradation. Catalyzes 'Lys-48'-linked polyubiquitination and subsequent degradation of a subset of host guanylate-binding proteins (GBP1, GBP2, GBP4 and GBP6), thereby suppressing host cell defense. In contrast, host GBP3 and GBP7 are not ubiquitinated by IpaH9.8. Uses UBE2D2 (UBCH5B) as an E2 ubiquitin-conjugating enzyme. In Shigella flexneri serotype X (strain 2002017), this protein is E3 ubiquitin-protein ligase ipaH9.8 (ipaH9.8).